A 284-amino-acid polypeptide reads, in one-letter code: MEMO1 family protein SSO0066 (284 aa).

It belongs to the MEMO1 family.

The polypeptide is MEMO1 family protein SSO0066 (Saccharolobus solfataricus (strain ATCC 35092 / DSM 1617 / JCM 11322 / P2) (Sulfolobus solfataricus)).